Here is a 341-residue protein sequence, read N- to C-terminus: MPILCTTGCSRKAFLKRPKTGDTLCRECFFLAFETEIHNTIEQNKLFRRGDVVAIAASGGKDSTVLAHVLKVLNERYDYGLKLVLLSIDEGITGYRDDSLETVKRNRDDYGMELKILSYDELYGWTMDKIVSKIGRSNNCTFCGVFRRQALDRGARLMEVDCVATGHNADDIAETVLMNILRGDTARLRRCCDIKTGGKDADSIPRVKPLKYAYEKEIVMYAHFKKLVYFSTECVFAPNAYRGHARAFLKDLERIRPSVIMDIIHSGEQLSFKDTVKKPLRGKCNRCGFVSSQQPCKACVLLEGLNRGLPKLGVGKKSKANRMIAAQNSLRQSANLVKTDF.

The protein belongs to the TtcA family. CTU1/NCS6/ATPBD3 subfamily.

Its subcellular location is the cytoplasm. The protein operates within tRNA modification; 5-methoxycarbonylmethyl-2-thiouridine-tRNA biosynthesis. Plays a central role in 2-thiolation of mcm(5)S(2)U at tRNA wobble positions of tRNA(Lys), tRNA(Glu) and tRNA(Gln). Directly binds tRNAs and probably acts by catalyzing adenylation of tRNAs, an intermediate required for 2-thiolation. It is unclear whether it acts as a sulfurtransferase that transfers sulfur from thiocarboxylated URM1 onto the uridine of tRNAs at wobble position. This chain is Cytoplasmic tRNA 2-thiolation protein 1, found in Aedes aegypti (Yellowfever mosquito).